Consider the following 295-residue polypeptide: (R)-3-hydroxydecanoyl-ACP:CoA transacylase (295 aa).

The 227-residue stretch at 28–254 (NTIILINGSL…VIRDAGHFLD (227 aa)) folds into the AB hydrolase-1 domain.

Its pathway is polyester biosynthesis; polyhydroxyalkanoate biosynthesis. Functionally, catalyzes the transfer of the acyl moiety from in vitro synthesized 3-hydroxydecanoyl-CoA to acyl carrier protein. This Ectopseudomonas oleovorans (Pseudomonas oleovorans) protein is (R)-3-hydroxydecanoyl-ACP:CoA transacylase (phaG).